The chain runs to 449 residues: Capsid protein (449 aa).

Positions 1–43 (MARRARRPRGRFYAFRRGRWHNLKRLRRRYKFRHRRRQRYRRR) are DNA-binding. The nuclear localization signals stretch occupies residues 6-47 (RRPRGRFYAFRRGRWHNLKRLRRRYKFRHRRRQRYRRRAFRK).

The protein belongs to the gyrovirus capsid protein family. As to quaternary structure, homomultimer (Potential). Interacts with Rep; this interaction relocates Rep into the nucleus.

The protein resides in the host nucleus. Its subcellular location is the virion. Its function is as follows. Self-assembles to form the virion icosahedral capsid with a T=1 symmetry. This very small capsid (25 nm in diameter) allows the virus to be very stable in the environment and resistant to some disinfectants, including detergents. Essential for the initial attachment to host receptors. After attachment, the virus is endocytosed and traffics to the nucleus. The capsid protein binds and transports the viral genome and Rep across the nuclear envelope. The protein is Capsid protein (VP1) of Chicken anemia virus (isolate USA CIA-1) (CAV).